Consider the following 1864-residue polypeptide: Nestin (1864 aa).

Position 1 is an N-acetylmethionine (M1). A head region spans residues 1–7; sequence MEGCVGE. The coil 1A stretch occupies residues 8–43; sequence ESFQMWELNRRLEAYLTRVKTLEEQNQLLSAELGGL. In terms of domain architecture, IF rod spans 8 to 314; sequence ESFQMWELNR…TLLEAENSRL (307 aa). The interval 44 to 55 is linker 1; the sequence is RAQSGDASWRAR. Residues 56–151 form a coil 1B region; the sequence is ADDELAALRV…ASHEEERAHL (96 aa). The tract at residues 152–174 is linker 12; the sequence is NAQAACTPRRPPAPAHASPIRAP. Residues 175-193 are coil 2A; the sequence is EVEELARRLGEVWRGAVRD. The interval 194–196 is linker 2; that stretch reads YQE. A coil 2B region spans residues 197 to 314; the sequence is RVAHMESSLG…TLLEAENSRL (118 aa). A Phosphoserine modification is found at S312. The segment at 315 to 1864 is tail; it reads QTPGRSSQAS…DGDSWSSGED (1550 aa). Residue T316 is modified to Phosphothreonine. Phosphoserine is present on residues S356 and S359. A Phosphothreonine modification is found at T389. Disordered regions lie at residues 437–492, 515–625, and 680–845; these read GVLP…EEEG, EIQE…MSPE, and KEDQ…LDEN. Residues 469–480 are compositionally biased toward basic and acidic residues; that stretch reads SILEAKDRESSE. Positions 559 to 573 are enriched in polar residues; that stretch reads KENCNSSIEENSGTV. S565 and S575 each carry phosphoserine. 2 stretches are compositionally biased toward basic and acidic residues: residues 575–598 and 609–618; these read SPEK…EKTL and LGEEEPRMED. Phosphoserine occurs at positions 623, 688, 731, 775, 841, 862, and 894. 4 stretches are compositionally biased toward basic and acidic residues: residues 680-690, 698-732, 742-776, and 786-843; these read KEDQRFPRSPE, PLEK…LKSP, LLEK…LKSP, and LLEK…RSLD. Basic and acidic residues-rich tracts occupy residues 916–925, 947–965, and 978–1012; these read ILGSLEDRNG, QRIV…RSPE, and LEGE…KSLE. The tract at residues 916–1113 is disordered; sequence ILGSLEDRNG…VKSSETENIE (198 aa). 3 positions are modified to phosphoserine: S963, S1010, and S1021. Positions 1065–1090 are enriched in basic and acidic residues; sequence EKVDPELPKPLRNDQEVVRSLDKENQ. Residues S1106 and S1127 each carry the phosphoserine modification. Disordered stretches follow at residues 1129 to 1158, 1175 to 1344, 1375 to 1722, and 1735 to 1807; these read DTQE…LGCV, LRSL…DSVE, EAIH…DDGL, and ETVS…GLEQ. Positions 1133-1143 are enriched in polar residues; sequence PLWSTEVTSET. Phosphoserine is present on residues S1177, S1188, and S1195. The span at 1204–1213 shows a compositional bias: basic and acidic residues; that stretch reads GPEREQHQES. Position 1216 is a phosphoserine (S1216). Basic and acidic residues predominate over residues 1254 to 1273; the sequence is TEDKAELHLRGQGGEEKAVE. S1290 is subject to Phosphoserine. Positions 1384–1405 are enriched in basic and acidic residues; that stretch reads ESVKAKIDQGLEEPGKEPKEAG. The segment covering 1429–1440 has biased composition (acidic residues); the sequence is ESGEGWGEEEAS. Positions 1514–1527 are enriched in basic and acidic residues; it reads GRVEDEPEFGRGEI. The segment covering 1532–1547 has biased composition (acidic residues); it reads QDWEEGREDSEADELG. Phosphoserine is present on residues S1541 and S1565. Residues 1612–1621 are compositionally biased toward acidic residues; the sequence is LSSEEFEDLG. 2 positions are modified to phosphoserine: S1656 and S1665. Positions 1658-1680 are enriched in acidic residues; sequence GFADEEESGEEGEEEDADEEEGA. Positions 1703-1712 are enriched in basic and acidic residues; sequence QRGDLEHESV. 2 stretches are compositionally biased toward low complexity: residues 1713–1722 and 1741–1755; these read GDSGLWDDGL and SAEP…SASL. Residues S1745 and S1747 each carry the phosphoserine modification. A compositionally biased stretch (polar residues) spans 1788 to 1797; it reads QGPNLESEQV. Phosphoserine is present on residues S1837, S1860, and S1861. The disordered stretch occupies residues 1841 to 1864; it reads LGPSQPLKFTLSGVDGDSWSSGED.

This sequence belongs to the intermediate filament family. In terms of assembly, forms homodimers and homotetramers in vitro. In mixtures with other intermediate filament proteins such as vimentin and alpha-internexin, this protein preferentially forms heterodimers which can assemble to form intermediate filaments if nestin does not exceed 25%. Interacts with FHOD3. Post-translationally, constitutively phosphorylated. This increases during mitosis when the cytoplasmic intermediate filament network is reorganized.

Its function is as follows. Required for brain and eye development. Promotes the disassembly of phosphorylated vimentin intermediate filaments (IF) during mitosis and may play a role in the trafficking and distribution of IF proteins and other cellular factors to daughter cells during progenitor cell division. Required for survival, renewal and mitogen-stimulated proliferation of neural progenitor cells. In Mus musculus (Mouse), this protein is Nestin (Nes).